We begin with the raw amino-acid sequence, 470 residues long: Probable V-type proton ATPase subunit H 2 (470 aa).

This sequence belongs to the V-ATPase H subunit family. As to quaternary structure, V-ATPase is a heteromultimeric enzyme made up of two complexes: the ATP-hydrolytic V1 complex and the proton translocation V0 complex. The V1 complex consists of three catalytic AB heterodimers that form a heterohexamer, three peripheral stalks each consisting of EG heterodimers, one central rotor including subunits D and F, and the regulatory subunits C and H. The proton translocation complex V0 consists of the proton transport subunit a, a ring of proteolipid subunits c9c'', rotary subunit d, subunits e and f, and the accessory subunits vah-19/Ac45 and vah-20/PRR.

Its function is as follows. Subunit of the V1 complex of vacuolar(H+)-ATPase (V-ATPase), a multisubunit enzyme composed of a peripheral complex (V1) that hydrolyzes ATP and a membrane integral complex (V0) that translocates protons. V-ATPase is responsible for acidifying and maintaining the pH of intracellular compartments and in some cell types, is targeted to the plasma membrane, where it is responsible for acidifying the extracellular environment. Subunit H is essential for V-ATPase activity, but not for the assembly of the complex. The chain is Probable V-type proton ATPase subunit H 2 from Caenorhabditis elegans.